Here is a 235-residue protein sequence, read N- to C-terminus: uncharacterized protein (235 aa).

The disordered stretch occupies residues 1–98; the sequence is MDTKLSVTGA…NKKNTLHYSK (98 aa). Glycyl lysine isopeptide (Lys-Gly) (interchain with G-Cter in ubiquitin) cross-links involve residues lysine 16 and lysine 35. Residues 38–50 are compositionally biased toward basic residues; the sequence is NGNKKRNKNRNRN. Residues 51-60 are compositionally biased toward basic and acidic residues; sequence KKTETKEQNE.

This is an uncharacterized protein from Saccharomyces cerevisiae (strain ATCC 204508 / S288c) (Baker's yeast).